The chain runs to 411 residues: MNVRISGEFRPGVINAPSSKSFSQRYILYSAFSNIPVTLKNVSFSDDERIALEIARACGADIEFNDSLTIKPDFRCPDEINAGESGTSLRLATGLLAARRCKTFIHEEASLLKRPLDDLIKTLSEKNVVFNNLDNGIMIDASNSIPSDSIIDGGRSSQFVSSMMMYHSLTSGSLKALNIVSNDYIKITIKTLNDFGISVYSSNGFFEFGKTLMKGNKICIEGDYSSAAFWIVLGLFKGDIEIKNLKSDSCQPDAAIINIINGISERKIDIYNNKIVVHKTRFLGDLYIDVDKNPDLAPPLSIIGIFSDVAVHILNYRRLEIKESNREENIISMARSFGALIEKNDNEMVIRRGKISLPERISFSDHRMIMSSIIAGLISSGDILYENIENINKSYPGFLNDLSNLGYYILK.

Positions 20, 21, and 25 each coordinate 3-phosphoshikimate. Phosphoenolpyruvate is bound at residue K20. The phosphoenolpyruvate site is built by G86 and R114. 3-phosphoshikimate contacts are provided by S156, S157, Q158, S181, D295, and K322. Q158 lines the phosphoenolpyruvate pocket. D295 acts as the Proton acceptor in catalysis. Phosphoenolpyruvate-binding residues include R326, R367, and K393.

The protein belongs to the EPSP synthase family. In terms of assembly, monomer.

It localises to the cytoplasm. It carries out the reaction 3-phosphoshikimate + phosphoenolpyruvate = 5-O-(1-carboxyvinyl)-3-phosphoshikimate + phosphate. It participates in metabolic intermediate biosynthesis; chorismate biosynthesis. Catalyzes the transfer of the enolpyruvyl moiety of phosphoenolpyruvate (PEP) to the 5-hydroxyl of shikimate-3-phosphate (S3P) to produce enolpyruvyl shikimate-3-phosphate and inorganic phosphate. This chain is 3-phosphoshikimate 1-carboxyvinyltransferase, found in Picrophilus torridus (strain ATCC 700027 / DSM 9790 / JCM 10055 / NBRC 100828 / KAW 2/3).